We begin with the raw amino-acid sequence, 456 residues long: uncharacterized protein (456 aa).

Basic and acidic residues-rich tracts occupy residues 181–210 (DQRK…DKKV) and 217–231 (KEIE…ENEE). Residues 181–231 (DQRKESIVNDERKKNPEFREKPDKNEDKKVKPPPSLKEIENKGIDHEENEE) are disordered. Residues 216–248 (LKEIENKGIDHEENEEDKKRELMFKLQLLQKQY) adopt a coiled-coil conformation. A helical membrane pass occupies residues 347–365 (LALAILFNAVWFIAAKMIM). Residues 383–407 (NKSGTTPNSVSPRTWGNSKSPQSEF) show a composition bias toward polar residues. The segment at 383–456 (NKSGTTPNSV…MREQGIETLK (74 aa)) is disordered. Residues 441-456 (DESRREMREQGIETLK) are compositionally biased toward basic and acidic residues.

This sequence belongs to the IIV-6 067R family.

It localises to the membrane. This is an uncharacterized protein from Invertebrate iridescent virus 6 (IIV-6).